The following is a 531-amino-acid chain: L-aspartate oxidase (531 aa).

Residues 11 to 14, Lys33, 40 to 47, 151 to 152, and Asp205 each bind FAD; these read SGAA, NSVYAQGG, and TA. Arg272 functions as the Proton donor/acceptor in the catalytic mechanism. FAD contacts are provided by residues Glu353 and 369 to 370; that span reads SL.

It belongs to the FAD-dependent oxidoreductase 2 family. NadB subfamily. As to quaternary structure, monomer. Homodimer. Requires FAD as cofactor.

It is found in the cytoplasm. The catalysed reaction is L-aspartate + O2 = iminosuccinate + H2O2. It carries out the reaction fumarate + L-aspartate = iminosuccinate + succinate. It participates in cofactor biosynthesis; NAD(+) biosynthesis; iminoaspartate from L-aspartate (oxidase route): step 1/1. Functionally, catalyzes the oxidation of L-aspartate to iminoaspartate, the first step in the de novo biosynthesis of NAD(+). Can use either oxygen or fumarate as electron acceptors, which allows the enzyme to be functional under aerobic and anaerobic conditions. This is L-aspartate oxidase from Bacillus subtilis (strain 168).